The sequence spans 550 residues: Vacuolar protein 8 (550 aa).

G2 is lipidated: N-myristoyl glycine. S-palmitoyl cysteine attachment occurs at residues C4 and C7. 8 ARM repeats span residues 75–114 (TEKD…NLAV), 116–155 (AENK…NLAT), 157–196 (DENK…NMTH), 198–237 (YENR…NIAV), 241–280 (HRKR…NLAS), 282–321 (ERYQ…NISI), 323–363 (PLNE…NLAA), and 454–493 (FIEC…QLLE). At T548 the chain carries Phosphothreonine. The residue at position 550 (S550) is a Phosphoserine.

This sequence belongs to the beta-catenin family.

It localises to the golgi apparatus membrane. The protein localises to the vacuole membrane. Its function is as follows. Functions in both vacuole inheritance and protein targeting from the cytoplasm to vacuole. This chain is Vacuolar protein 8 (vac8), found in Schizosaccharomyces pombe (strain 972 / ATCC 24843) (Fission yeast).